The following is a 197-amino-acid chain: Peptidyl-tRNA hydrolase (197 aa).

Tyrosine 23 is a tRNA binding site. Histidine 28 (proton acceptor) is an active-site residue. TRNA-binding residues include phenylalanine 73, asparagine 75, and asparagine 121.

This sequence belongs to the PTH family. As to quaternary structure, monomer.

The protein localises to the cytoplasm. It carries out the reaction an N-acyl-L-alpha-aminoacyl-tRNA + H2O = an N-acyl-L-amino acid + a tRNA + H(+). Its function is as follows. Hydrolyzes ribosome-free peptidyl-tRNAs (with 1 or more amino acids incorporated), which drop off the ribosome during protein synthesis, or as a result of ribosome stalling. In terms of biological role, catalyzes the release of premature peptidyl moieties from peptidyl-tRNA molecules trapped in stalled 50S ribosomal subunits, and thus maintains levels of free tRNAs and 50S ribosomes. The polypeptide is Peptidyl-tRNA hydrolase (Frankia casuarinae (strain DSM 45818 / CECT 9043 / HFP020203 / CcI3)).